A 258-amino-acid chain; its full sequence is Imidazole glycerol phosphate synthase subunit HisF (258 aa).

Catalysis depends on residues D11 and D130.

The protein belongs to the HisA/HisF family. In terms of assembly, heterodimer of HisH and HisF.

The protein resides in the cytoplasm. The enzyme catalyses 5-[(5-phospho-1-deoxy-D-ribulos-1-ylimino)methylamino]-1-(5-phospho-beta-D-ribosyl)imidazole-4-carboxamide + L-glutamine = D-erythro-1-(imidazol-4-yl)glycerol 3-phosphate + 5-amino-1-(5-phospho-beta-D-ribosyl)imidazole-4-carboxamide + L-glutamate + H(+). It functions in the pathway amino-acid biosynthesis; L-histidine biosynthesis; L-histidine from 5-phospho-alpha-D-ribose 1-diphosphate: step 5/9. Its function is as follows. IGPS catalyzes the conversion of PRFAR and glutamine to IGP, AICAR and glutamate. The HisF subunit catalyzes the cyclization activity that produces IGP and AICAR from PRFAR using the ammonia provided by the HisH subunit. This chain is Imidazole glycerol phosphate synthase subunit HisF, found in Blochmanniella pennsylvanica (strain BPEN).